The following is a 1323-amino-acid chain: Receptor tyrosine-protein kinase let-23 (1323 aa).

An N-terminal signal peptide occupies residues M1–F20. The Extracellular portion of the chain corresponds to F21–R818. 2 N-linked (GlcNAc...) asparagine glycosylation sites follow: N91 and N169. 11 cysteine pairs are disulfide-bonded: C220–C228, C224–C236, C244–C251, C248–C262, C263–C271, C267–C279, C282–C291, C295–C322, C326–C337, C341–C356, and C359–C364. A glycan (N-linked (GlcNAc...) asparagine) is linked at N255. Residue N376 is glycosylated (N-linked (GlcNAc...) asparagine). Cystine bridges form between C520–C529, C524–C537, C540–C549, C553–C567, C570–C577, C574–C585, C588–C604, C608–C620, C623–C632, C627–C644, C647–C660, C670–C693, C696–C703, C700–C715, C717–C731, C735–C750, C753–C763, C757–C771, C774–C787, and C791–C805. A glycan (N-linked (GlcNAc...) asparagine) is linked at N561. N-linked (GlcNAc...) asparagine glycosylation is present at N655. The N-linked (GlcNAc...) asparagine glycan is linked to N746. Residue N776 is glycosylated (N-linked (GlcNAc...) asparagine). The chain crosses the membrane as a helical span at residues M819 to V839. Over Y840–L1323 the chain is Cytoplasmic. In terms of domain architecture, Protein kinase spans T885–L1152. Residues L891–V899 and K919 contribute to the ATP site. The active-site Proton acceptor is the D1010. Over residues G1265 to Y1289 the composition is skewed to polar residues. The tract at residues G1265–L1323 is disordered. The segment covering P1293 to T1302 has biased composition (basic and acidic residues). The segment covering S1303–E1315 has biased composition (acidic residues).

It belongs to the protein kinase superfamily. Tyr protein kinase family. EGF receptor subfamily. As to expression, expressed in vulval precursor cells (at protein level). Expressed in ALA neurons, 2 ventral head neurons, a single neuron in the tail, pharyngeal-intestinal valve and posterior arcade epithelial cells.

It is found in the apical cell membrane. It localises to the basolateral cell membrane. It catalyses the reaction L-tyrosyl-[protein] + ATP = O-phospho-L-tyrosyl-[protein] + ADP + H(+). In terms of biological role, tyrosine-protein kinase receptor which, upon binding ligand lin-3, activates 2 signaling cascades: the let-60/Ras and MAP kinase signaling pathway and the let-60-independent phospholipase C-mediated Ca(2+) signaling pathway. Each pathway regulates distinct functions. By activating let-60/Ras, regulates larval development, induction of vulva cell precursors during vulva development, male spicule formation and posterior development of the epidermis. Probably by activating phospholipase plc-3 and inositol 1,4,5-trisphosphate receptor itr-1 signaling cascade downstream of ligand lin-3, plays a role in ovulation by promoting ovulatory gonadal sheath cell contractions. Probably by regulating neuronal transmission in ALA neurons, mediates, independently of let-60/Ras, the decrease in pharyngeal pumping and locomotion during the quiescent state that precedes each larval molt, downstream of lin-3 and upstream of plc-3. In Caenorhabditis elegans, this protein is Receptor tyrosine-protein kinase let-23.